A 433-amino-acid chain; its full sequence is 3-deoxy-D-manno-octulosonic acid transferase (433 aa).

Residues 11 to 31 (TFLYDCFLIFAFMVGLPRILY) form a helical; Signal-anchor membrane-spanning segment. The active-site Proton acceptor is the Glu-70. Residues 277–278 (PR), 317–319 (IGW), and 344–347 (NLLE) each bind CMP.

The protein belongs to the glycosyltransferase group 1 family. Glycosyltransferase 30 subfamily.

The protein resides in the cell inner membrane. It catalyses the reaction lipid IVA (E. coli) + CMP-3-deoxy-beta-D-manno-octulosonate = alpha-Kdo-(2-&gt;6)-lipid IVA (E. coli) + CMP + H(+). The catalysed reaction is alpha-Kdo-(2-&gt;6)-lipid IVA (E. coli) + CMP-3-deoxy-beta-D-manno-octulosonate = alpha-Kdo-(2-&gt;4)-alpha-Kdo-(2-&gt;6)-lipid IVA (E. coli) + CMP + H(+). It carries out the reaction alpha-Kdo-(2-&gt;4)-alpha-Kdo-(2-&gt;6)-lipid IVA (E. coli) + CMP-3-deoxy-beta-D-manno-octulosonate = alpha-Kdo-(2-&gt;8)-alpha-Kdo-(2-&gt;4)-alpha-Kdo-(2-&gt;6)-lipid IVA (E. coli) + CMP + H(+). The enzyme catalyses alpha-Kdo-(2-&gt;8)-alpha-Kdo-(2-&gt;4)-alpha-Kdo-(2-&gt;6)-lipid IVA (E. coli) + CMP-3-deoxy-beta-D-manno-octulosonate = alpha-Kdo-(2-&gt;8)-[alpha-Kdo-(2-&gt;4)]-alpha-Kdo-(2-&gt;4)-alpha-Kdo-(2-&gt;6)-lipid IVA + CMP + H(+). It participates in bacterial outer membrane biogenesis; LPS core biosynthesis. In terms of biological role, involved in lipopolysaccharide (LPS) biosynthesis. Catalyzes the transfer of predominantly four 3-deoxy-D-manno-octulosonate (Kdo) residues from CMP-Kdo to lipid IV(A), the tetraacyldisaccharide-1,4'-bisphosphate precursor of lipid A. Thus generates the genus-specific LPS epitope of Chlamydia, composed of the trisaccharide alpha-Kdo-(2-&gt;8)-alpha-Kdo-(2-&gt;4)-alpha-Kdo. The polypeptide is 3-deoxy-D-manno-octulosonic acid transferase (waaA) (Chlamydophila psittaci (strain ATCC VR-125 / 6BC) (Chlamydia psittaci)).